The chain runs to 1247 residues: Clustered mitochondria protein homolog (1247 aa).

The interval 1–43 is disordered; sequence MTLGSETKTDVEVPIINGKHEIPQEENDSGHSSINTPDSSEPD. Polar residues predominate over residues 30-39; the sequence is GHSSINTPDS. The Clu domain occupies 329–579; that stretch reads SDSLRAIELT…RSMPPDVHYL (251 aa). Positions 1222-1247 are disordered; it reads GKQQNGTTEESKTTDVAAQLDNETLD.

The protein belongs to the CLU family.

It is found in the cytoplasm. Its function is as follows. mRNA-binding protein involved in proper cytoplasmic distribution of mitochondria. The chain is Clustered mitochondria protein homolog from Caenorhabditis elegans.